Consider the following 285-residue polypeptide: Bifunctional protein FolD (285 aa).

Residues 166–168 (GAS) and isoleucine 232 each bind NADP(+).

The protein belongs to the tetrahydrofolate dehydrogenase/cyclohydrolase family. In terms of assembly, homodimer.

The enzyme catalyses (6R)-5,10-methylene-5,6,7,8-tetrahydrofolate + NADP(+) = (6R)-5,10-methenyltetrahydrofolate + NADPH. It carries out the reaction (6R)-5,10-methenyltetrahydrofolate + H2O = (6R)-10-formyltetrahydrofolate + H(+). The protein operates within one-carbon metabolism; tetrahydrofolate interconversion. In terms of biological role, catalyzes the oxidation of 5,10-methylenetetrahydrofolate to 5,10-methenyltetrahydrofolate and then the hydrolysis of 5,10-methenyltetrahydrofolate to 10-formyltetrahydrofolate. This is Bifunctional protein FolD from Aliivibrio fischeri (strain MJ11) (Vibrio fischeri).